The following is a 170-amino-acid chain: Disulfide bond formation protein B 1 (170 aa).

Residues 1–14 (MNDYTLAIRRERRL) are Cytoplasmic-facing. Residues 15-31 (LMLLGWVCIALLAGALY) traverse the membrane as a helical segment. Over 32-49 (LQYVKNEDPCPLCIIQRY) the chain is Periplasmic. A disulfide bond links Cys-41 and Cys-44. The chain crosses the membrane as a helical span at residues 50-64 (FFCAIGIFAFLAAGI). The Cytoplasmic segment spans residues 65–71 (RNWRGVW). A helical transmembrane segment spans residues 72-89 (VLELLIAIAAAGGVGTAA). Over 90–144 (RHLTIQMNPGFSCGFDTLQPIVDSLPPAQWFPGMFKVAGLCETVYPPIFGILLPG) the chain is Periplasmic. A disulfide bridge links Cys-102 with Cys-130. A helical membrane pass occupies residues 145–163 (WSLIGFAVILIAVVASLWR). At 164–170 (HRRKLVG) the chain is on the cytoplasmic side.

The protein belongs to the DsbB family.

It is found in the cell inner membrane. Its function is as follows. Required for disulfide bond formation in some periplasmic proteins. Acts by oxidizing the DsbA protein. This is Disulfide bond formation protein B 1 from Burkholderia lata (strain ATCC 17760 / DSM 23089 / LMG 22485 / NCIMB 9086 / R18194 / 383).